Consider the following 626-residue polypeptide: Chaperone protein DnaK (626 aa).

Residue Thr197 is modified to Phosphothreonine; by autocatalysis. Composition is skewed to basic and acidic residues over residues 512–528 (DAEA…EAVE) and 539–551 (QTEK…GEKI). 2 disordered regions span residues 512–551 (DAEA…GEKI) and 601–626 (DQNA…AEVE).

Belongs to the heat shock protein 70 family.

Its function is as follows. Acts as a chaperone. The protein is Chaperone protein DnaK of Campylobacter fetus subsp. fetus (strain 82-40).